Here is a 328-residue protein sequence, read N- to C-terminus: Flagellar motor switch protein FliM (328 aa).

An interaction with unphosphorylated CheY region spans residues 1–45 (MSDVLSQEEINQLIEALMKGELKEEDLLKEEEEKKVKPYDFKRPS).

This sequence belongs to the FliM family. Interacts (via N-terminus) with unphosphorylated CheY. Interacts (via central domain) with FliG (via central domain or via central domain and C-terminus).

Its subcellular location is the cell inner membrane. The protein resides in the bacterial flagellum basal body. FliM is one of three proteins (FliG, FliN, FliM) that forms the rotor-mounted switch complex (C ring), located at the base of the basal body. This complex interacts with the CheY and CheX chemotaxis proteins, in addition to contacting components of the motor that determine the direction of flagellar rotation. This Thermotoga maritima (strain ATCC 43589 / DSM 3109 / JCM 10099 / NBRC 100826 / MSB8) protein is Flagellar motor switch protein FliM.